Here is a 292-residue protein sequence, read N- to C-terminus: Probable ABC transporter phosphonate/phosphite binding protein PhnD2 (292 aa).

An N-terminal signal peptide occupies residues 1 to 20; it reads MKLKSLLSVFTISIVALTSA. C21 carries N-palmitoyl cysteine lipidation. The S-diacylglycerol cysteine moiety is linked to residue C21.

Belongs to the phosphate/phosphite/phosphonate binding protein family. The complex may be composed of two ATP-binding proteins (PhnC2), two transmembrane proteins (PhnE2) and a solute-binding protein (PhnD2).

Its subcellular location is the cell membrane. Its function is as follows. Probably part of the ABC transporter complex PhnC2D2E2. Binds strongly to methylphosphonate (MPn), ethylphosphonate (EPn) and inorganic phosphite. The protein is Probable ABC transporter phosphonate/phosphite binding protein PhnD2 of Prochlorococcus marinus (strain MIT 9301).